We begin with the raw amino-acid sequence, 92 residues long: Transcriptional regulator WhiB1 (92 aa).

Positions 12–74 constitute a 4Fe-4S Wbl-type domain; sequence ACRDKDPELF…GGLSEDERRA (63 aa). Residues C13, C41, C44, and C50 each contribute to the [4Fe-4S] cluster site.

It belongs to the WhiB family. The cofactor is [4Fe-4S] cluster. Post-translationally, the Fe-S cluster can be nitrosylated by nitric oxide (NO). In terms of processing, upon Fe-S cluster removal intramolecular disulfide bonds are formed.

It localises to the cytoplasm. Its function is as follows. Acts as a transcriptional regulator. Probably redox-responsive. The apo- but not holo-form probably binds DNA. The protein is Transcriptional regulator WhiB1 (whiB1) of Bifidobacterium longum (strain NCC 2705).